Consider the following 417-residue polypeptide: Putative competence-damage inducible protein (417 aa).

The protein belongs to the CinA family.

This is Putative competence-damage inducible protein from Oceanobacillus iheyensis (strain DSM 14371 / CIP 107618 / JCM 11309 / KCTC 3954 / HTE831).